The following is a 63-amino-acid chain: Large ribosomal subunit protein bL32 (63 aa).

A compositionally biased stretch (basic residues) spans 1 to 18 (MAHPKAKVSKSRRDKRRA). The tract at residues 1–25 (MAHPKAKVSKSRRDKRRAQFNARTK) is disordered.

It belongs to the bacterial ribosomal protein bL32 family.

This Chlorobium phaeovibrioides (strain DSM 265 / 1930) (Prosthecochloris vibrioformis (strain DSM 265)) protein is Large ribosomal subunit protein bL32.